The sequence spans 232 residues: Phosphatidylserine decarboxylase proenzyme (232 aa).

The Schiff-base intermediate with substrate; via pyruvic acid role is filled by Ser190. Residue Ser190 is modified to Pyruvic acid (Ser); by autocatalysis.

It belongs to the phosphatidylserine decarboxylase family. PSD-A subfamily. In terms of assembly, heterodimer of a large membrane-associated beta subunit and a small pyruvoyl-containing alpha subunit. Requires pyruvate as cofactor. In terms of processing, is synthesized initially as an inactive proenzyme. Formation of the active enzyme involves a self-maturation process in which the active site pyruvoyl group is generated from an internal serine residue via an autocatalytic post-translational modification. Two non-identical subunits are generated from the proenzyme in this reaction, and the pyruvate is formed at the N-terminus of the alpha chain, which is derived from the carboxyl end of the proenzyme. The post-translation cleavage follows an unusual pathway, termed non-hydrolytic serinolysis, in which the side chain hydroxyl group of the serine supplies its oxygen atom to form the C-terminus of the beta chain, while the remainder of the serine residue undergoes an oxidative deamination to produce ammonia and the pyruvoyl prosthetic group on the alpha chain.

The protein resides in the cell membrane. The enzyme catalyses a 1,2-diacyl-sn-glycero-3-phospho-L-serine + H(+) = a 1,2-diacyl-sn-glycero-3-phosphoethanolamine + CO2. It functions in the pathway phospholipid metabolism; phosphatidylethanolamine biosynthesis; phosphatidylethanolamine from CDP-diacylglycerol: step 2/2. Catalyzes the formation of phosphatidylethanolamine (PtdEtn) from phosphatidylserine (PtdSer). The protein is Phosphatidylserine decarboxylase proenzyme of Allorhizobium ampelinum (strain ATCC BAA-846 / DSM 112012 / S4) (Agrobacterium vitis (strain S4)).